We begin with the raw amino-acid sequence, 217 residues long: Adapter protein MecA (217 aa).

The protein belongs to the MecA family. Homodimer.

Enables the recognition and targeting of unfolded and aggregated proteins to the ClpC protease or to other proteins involved in proteolysis. The polypeptide is Adapter protein MecA (Listeria monocytogenes serovar 1/2a (strain ATCC BAA-679 / EGD-e)).